The sequence spans 390 residues: Sulfate adenylyltransferase (390 aa).

This sequence belongs to the sulfate adenylyltransferase family.

The enzyme catalyses sulfate + ATP + H(+) = adenosine 5'-phosphosulfate + diphosphate. Its pathway is sulfur metabolism; hydrogen sulfide biosynthesis; sulfite from sulfate: step 1/3. The sequence is that of Sulfate adenylyltransferase (sat) from Synechocystis sp. (strain ATCC 27184 / PCC 6803 / Kazusa).